The sequence spans 186 residues: Cytochrome c oxidase polypeptide 5, mitochondrial (186 aa).

The transit peptide at 1-20 (MYLSKIICKKVPMKLLCTRN) directs the protein to the mitochondrion. Over 21 to 107 (AATVSAAATN…GPRAFSHISQ (87 aa)) the chain is Mitochondrial matrix. A helical transmembrane segment spans residues 108 to 128 (KTVFWGTVAGLTIGVVLFGLI). Topologically, residues 129–186 (RTQAAPSPRTMTREWQEKSNEYMKENKINPISGEASEGFKGRGQISGGIFSPSEKDKK) are mitochondrial intermembrane. A disordered region spans residues 149-186 (EYMKENKINPISGEASEGFKGRGQISGGIFSPSEKDKK).

It belongs to the cytochrome c oxidase IV family. As to quaternary structure, component of the cytochrome c oxidase (complex IV, CIV), a multisubunit enzyme composed of a catalytic core of 3 subunits and seevral supernumerary subunits. The complex exists as a monomer or a dimer and forms supercomplexes (SCs) in the inner mitochondrial membrane with ubiquinol-cytochrome c oxidoreductase (cytochrome b-c1 complex, complex III, CIII).

It is found in the mitochondrion inner membrane. The protein operates within energy metabolism; oxidative phosphorylation. Functionally, component of the cytochrome c oxidase, the last enzyme in the mitochondrial electron transport chain which drives oxidative phosphorylation. The respiratory chain contains 3 multisubunit complexes succinate dehydrogenase (complex II, CII), ubiquinol-cytochrome c oxidoreductase (cytochrome b-c1 complex, complex III, CIII) and cytochrome c oxidase (complex IV, CIV), that cooperate to transfer electrons derived from NADH and succinate to molecular oxygen, creating an electrochemical gradient over the inner membrane that drives transmembrane transport and the ATP synthase. Cytochrome c oxidase is the component of the respiratory chain that catalyzes the reduction of oxygen to water. Electrons originating from reduced cytochrome c in the intermembrane space (IMS) are transferred via the dinuclear copper A center (CU(A)) of subunit 2 and heme A of subunit 1 to the active site in subunit 1, a binuclear center (BNC) formed by heme A3 and copper B (CU(B)). The BNC reduces molecular oxygen to 2 water molecules using 4 electrons from cytochrome c in the IMS and 4 protons from the mitochondrial matrix. The protein is Cytochrome c oxidase polypeptide 5, mitochondrial (cox5) of Schizosaccharomyces pombe (strain 972 / ATCC 24843) (Fission yeast).